The following is a 202-amino-acid chain: ATP-dependent Clp protease proteolytic subunit (202 aa).

The Nucleophile role is filled by Ser-106. His-131 is an active-site residue.

It belongs to the peptidase S14 family. In terms of assembly, fourteen ClpP subunits assemble into 2 heptameric rings which stack back to back to give a disk-like structure with a central cavity, resembling the structure of eukaryotic proteasomes.

The protein resides in the cytoplasm. The catalysed reaction is Hydrolysis of proteins to small peptides in the presence of ATP and magnesium. alpha-casein is the usual test substrate. In the absence of ATP, only oligopeptides shorter than five residues are hydrolyzed (such as succinyl-Leu-Tyr-|-NHMec, and Leu-Tyr-Leu-|-Tyr-Trp, in which cleavage of the -Tyr-|-Leu- and -Tyr-|-Trp bonds also occurs).. Cleaves peptides in various proteins in a process that requires ATP hydrolysis. Has a chymotrypsin-like activity. Plays a major role in the degradation of misfolded proteins. This chain is ATP-dependent Clp protease proteolytic subunit, found in Acidovorax sp. (strain JS42).